Here is a 131-residue protein sequence, read N- to C-terminus: Aspartate 1-decarboxylase (131 aa).

The active-site Schiff-base intermediate with substrate; via pyruvic acid is the Ser25. Residue Ser25 is modified to Pyruvic acid (Ser). Thr57 provides a ligand contact to substrate. Residue Tyr58 is the Proton donor of the active site. Residue 73–75 participates in substrate binding; the sequence is GAA.

It belongs to the PanD family. In terms of assembly, heterooctamer of four alpha and four beta subunits. Pyruvate is required as a cofactor. Post-translationally, is synthesized initially as an inactive proenzyme, which is activated by self-cleavage at a specific serine bond to produce a beta-subunit with a hydroxyl group at its C-terminus and an alpha-subunit with a pyruvoyl group at its N-terminus.

The protein localises to the cytoplasm. The catalysed reaction is L-aspartate + H(+) = beta-alanine + CO2. It functions in the pathway cofactor biosynthesis; (R)-pantothenate biosynthesis; beta-alanine from L-aspartate: step 1/1. Catalyzes the pyruvoyl-dependent decarboxylation of aspartate to produce beta-alanine. This is Aspartate 1-decarboxylase from Acaryochloris marina (strain MBIC 11017).